The following is a 255-amino-acid chain: Diphthine synthase (255 aa).

S-adenosyl-L-methionine-binding positions include Leu9, Asp85, Val88, 113–114 (SI), Leu164, Ala207, and His232.

Belongs to the diphthine synthase family. As to quaternary structure, homodimer.

The catalysed reaction is 2-[(3S)-amino-3-carboxypropyl]-L-histidyl-[translation elongation factor 2] + 3 S-adenosyl-L-methionine = diphthine-[translation elongation factor 2] + 3 S-adenosyl-L-homocysteine + 3 H(+). It participates in protein modification; peptidyl-diphthamide biosynthesis. S-adenosyl-L-methionine-dependent methyltransferase that catalyzes the trimethylation of the amino group of the modified target histidine residue in translation elongation factor 2 (EF-2), to form an intermediate called diphthine. The three successive methylation reactions represent the second step of diphthamide biosynthesis. In Methanococcus maripaludis (strain C7 / ATCC BAA-1331), this protein is Diphthine synthase.